The primary structure comprises 1097 residues: DNA-directed RNA polymerase subunit beta (1097 aa).

The segment at Q1072–D1097 is disordered. A compositionally biased stretch (polar residues) spans R1077–T1091.

This sequence belongs to the RNA polymerase beta chain family. As to quaternary structure, in cyanobacteria the RNAP catalytic core is composed of 2 alpha, 1 beta, 1 beta', 1 gamma and 1 omega subunit. When a sigma factor is associated with the core the holoenzyme is formed, which can initiate transcription.

The enzyme catalyses RNA(n) + a ribonucleoside 5'-triphosphate = RNA(n+1) + diphosphate. DNA-dependent RNA polymerase catalyzes the transcription of DNA into RNA using the four ribonucleoside triphosphates as substrates. This chain is DNA-directed RNA polymerase subunit beta, found in Prochlorococcus marinus (strain MIT 9301).